A 472-amino-acid chain; its full sequence is ESX-3 secretion system protein EccD3 (472 aa).

The next 11 membrane-spanning stretches (helical) occupy residues 121–141 (WGIA…ALLA), 155–175 (LAGL…GLLI), 183–203 (GIAL…LAVP), 211–231 (VLLG…IPSA), 236–256 (VVAF…AAGA), 258–278 (LLWQ…ALLV), 327–347 (QSGF…AIAV), 349–369 (PEAL…AATL), 381–401 (AWLL…YTAT), 405–425 (VAAF…VVVA), and 450–470 (GLDV…AWVL).

Belongs to the EccD/Snm4 family. In terms of assembly, part of the ESX-3 / type VII secretion system (T7SS), which is composed of cytosolic and membrane components. The ESX-3 membrane complex is composed of EccB3, EccC3, EccD3 and EccE3.

It is found in the cell inner membrane. Its function is as follows. Part of the ESX-3 specialized secretion system, which is important for iron and zinc uptake or homeostasis. This chain is ESX-3 secretion system protein EccD3, found in Mycobacterium tuberculosis (strain CDC 1551 / Oshkosh).